The primary structure comprises 341 residues: MKNIGRLAVTALIAVFIFSVTGCNMIEKTPEAIAKSTVAEVNGEKITRSDLDKDPNTIQLITQVKQQYGENYKENEDAVNTIKTQKEQILDDLITNKVVAQKAKELKLLPDETKLKSDMETQIAQLKKQNFNDDAEQFNTALKAQGFTEESFKAMFLSQLRTQQTLEKVTESISKNIKITDKEIEDYYNTNKSKYTEQPNKMHLAHILVKTEDEAKKVKKRLDDGEDFAKVAKEVSQDTASKDNGGDLGTVNYDNSGYDADFMAGALALKEGAISAPVKSSFGYHIIKCIKKEEYPVKALSAVKDQIKTQLESDKKNSLVSQKIQEWKKASTITKKEKNII.

An N-terminal signal peptide occupies residues 1-22 (MKNIGRLAVTALIAVFIFSVTG). Cysteine 23 carries the N-palmitoyl cysteine lipid modification. Residue cysteine 23 is the site of S-diacylglycerol cysteine attachment. Positions 199-291 (PNKMHLAHIL…FGYHIIKCIK (93 aa)) constitute a PpiC domain.

This sequence belongs to the PrsA family.

It is found in the cell membrane. The enzyme catalyses [protein]-peptidylproline (omega=180) = [protein]-peptidylproline (omega=0). Plays a major role in protein secretion by helping the post-translocational extracellular folding of several secreted proteins. This Clostridium kluyveri (strain NBRC 12016) protein is Foldase protein PrsA.